A 115-amino-acid polypeptide reads, in one-letter code: UPF0597 protein HI_0855 (115 aa).

The protein belongs to the UPF0597 family.

The polypeptide is UPF0597 protein HI_0855 (Haemophilus influenzae (strain ATCC 51907 / DSM 11121 / KW20 / Rd)).